The primary structure comprises 840 residues: Translation initiation factor IF-2 (840 aa).

Residues 95 to 143 show a composition bias toward basic and acidic residues; it reads RSPDEIEAERQRELEEQRAAEEAERLKAEEAAARQRAEEEARKAEEAAR. 2 disordered regions span residues 95 to 155 and 172 to 256; these read RSPD…ATAG and KPAA…PTGP. Over residues 144-155 the composition is skewed to low complexity; the sequence is AKAAQEAAATAG. 2 stretches are compositionally biased toward basic and acidic residues: residues 175-191 and 223-232; these read AVEE…PKRD and STDEESDGYR. A compositionally biased stretch (basic residues) spans 233–247; the sequence is RGGRGGKSKLKKRNQ. Positions 340–509 constitute a tr-type G domain; it reads TRAPVVTVMG…LLQAEVLELK (170 aa). Positions 349-356 are G1; sequence GHVDHGKT. 349-356 contacts GTP; that stretch reads GHVDHGKT. A G2 region spans residues 374–378; it reads GITQH. The tract at residues 395-398 is G3; it reads DTPG. GTP contacts are provided by residues 395-399 and 449-452; these read DTPGH and NKID. The G4 stretch occupies residues 449-452; it reads NKID. A G5 region spans residues 485–487; sequence SAK.

It belongs to the TRAFAC class translation factor GTPase superfamily. Classic translation factor GTPase family. IF-2 subfamily.

Its subcellular location is the cytoplasm. In terms of biological role, one of the essential components for the initiation of protein synthesis. Protects formylmethionyl-tRNA from spontaneous hydrolysis and promotes its binding to the 30S ribosomal subunits. Also involved in the hydrolysis of GTP during the formation of the 70S ribosomal complex. This Pseudomonas aeruginosa (strain LESB58) protein is Translation initiation factor IF-2.